We begin with the raw amino-acid sequence, 185 residues long: RRM domain-containing protein ECU09_1470 (185 aa).

RRM domains follow at residues N8–R87 and K101–E170.

This chain is RRM domain-containing protein ECU09_1470, found in Encephalitozoon cuniculi (strain GB-M1) (Microsporidian parasite).